The chain runs to 598 residues: NADH-ubiquinone oxidoreductase chain 5 (598 aa).

A run of 14 helical transmembrane segments spans residues 6 to 26, 32 to 52, 84 to 100, 113 to 133, 136 to 156, 241 to 261, 272 to 292, 301 to 320, 325 to 347, 370 to 390, 409 to 429, 456 to 476, 478 to 498, and 576 to 596; these read LTLI…PPII, MILT…PLTI, YTVI…WSIM, MDKF…FISA, LLQL…LISW, TPVS…FLLI, LMLE…ALCA, IIAF…VGLN, AFLH…GSII, TTCM…AGFF, LMVT…LIIM, LAWG…PMKP, IFTM…ISLI, and LNSA…LSLT.

This sequence belongs to the complex I subunit 5 family.

It localises to the mitochondrion inner membrane. It catalyses the reaction a ubiquinone + NADH + 5 H(+)(in) = a ubiquinol + NAD(+) + 4 H(+)(out). In terms of biological role, core subunit of the mitochondrial membrane respiratory chain NADH dehydrogenase (Complex I) that is believed to belong to the minimal assembly required for catalysis. Complex I functions in the transfer of electrons from NADH to the respiratory chain. The immediate electron acceptor for the enzyme is believed to be ubiquinone. The chain is NADH-ubiquinone oxidoreductase chain 5 (MT-ND5) from Petromyzon marinus (Sea lamprey).